The chain runs to 156 residues: MSRKNQAPKREVLPDPLYNSKIVTRLINRVMLDGKRGTAATIVYDAFSTIKEATGNDALEVFETAMENIMPVLEVRARRVGGSNYQVPVEVRPERRTTLGLRWLVNASRARGEHTMKERLAKEIMDAANNTGASVKKREDTHKMAEANRAFAHFRW.

It belongs to the universal ribosomal protein uS7 family. Part of the 30S ribosomal subunit. Contacts proteins S9 and S11.

In terms of biological role, one of the primary rRNA binding proteins, it binds directly to 16S rRNA where it nucleates assembly of the head domain of the 30S subunit. Is located at the subunit interface close to the decoding center, probably blocks exit of the E-site tRNA. This is Small ribosomal subunit protein uS7 from Streptococcus uberis (strain ATCC BAA-854 / 0140J).